Reading from the N-terminus, the 492-residue chain is Steroid 21-hydroxylase (492 aa).

Residues arginine 91 and lysine 120 each coordinate heme b. Residue arginine 231 coordinates 17alpha-hydroxyprogesterone. Arginine 231 is a progesterone binding site. 3 residues coordinate heme b: histidine 363, arginine 424, and cysteine 426.

This sequence belongs to the cytochrome P450 family. Requires heme b as cofactor.

The protein resides in the endoplasmic reticulum membrane. It localises to the microsome membrane. The enzyme catalyses 17alpha-hydroxyprogesterone + reduced [NADPH--hemoprotein reductase] + O2 = 11-deoxycortisol + oxidized [NADPH--hemoprotein reductase] + H2O + H(+). The catalysed reaction is progesterone + reduced [NADPH--hemoprotein reductase] + O2 = 21-hydroxyprogesterone + oxidized [NADPH--hemoprotein reductase] + H2O + H(+). In terms of biological role, specifically catalyzes the 21-hydroxylation of steroids. Required for the adrenal synthesis of mineralocorticoids and glucocorticoids. This is Steroid 21-hydroxylase (CYP21) from Canis lupus familiaris (Dog).